We begin with the raw amino-acid sequence, 927 residues long: Transmembrane protein 132 homolog (927 aa).

Positions 1-18 are cleaved as a signal peptide; sequence MLKKLWICISCIVTTALS. A helical transmembrane segment spans residues 749–769; the sequence is FHIFVLTIIGLIILFLFISFV. The segment at 789 to 842 is disordered; that stretch reads LSSSSGSNSRQEETNEWVWLSQPQPPSSTISSGYSGNKSTAERQSSNGDDPSRT. The span at 817 to 842 shows a compositional bias: polar residues; the sequence is TISSGYSGNKSTAERQSSNGDDPSRT.

The protein belongs to the TMEM132 family. As to quaternary structure, interacts with gex-3. As to expression, specifically expressed in neurons.

Its subcellular location is the membrane. Its function is as follows. Regulates neuronal morphology via inhibition of the WAVE regulatory complex (WCR), a complex that controls F-actin cytoskeletal dynamics. The chain is Transmembrane protein 132 homolog from Caenorhabditis elegans.